The primary structure comprises 477 residues: Glycogen synthase (477 aa).

Lysine 15 lines the ADP-alpha-D-glucose pocket.

The protein belongs to the glycosyltransferase 1 family. Bacterial/plant glycogen synthase subfamily.

It carries out the reaction [(1-&gt;4)-alpha-D-glucosyl](n) + ADP-alpha-D-glucose = [(1-&gt;4)-alpha-D-glucosyl](n+1) + ADP + H(+). The protein operates within glycan biosynthesis; glycogen biosynthesis. Its function is as follows. Synthesizes alpha-1,4-glucan chains using ADP-glucose. The sequence is that of Glycogen synthase from Streptococcus pneumoniae (strain ATCC 700669 / Spain 23F-1).